The sequence spans 437 residues: Trigger factor (437 aa).

In terms of domain architecture, PPIase FKBP-type spans 163 to 248; that stretch reads GDRVIIDFEG…LNNVSEATLP (86 aa).

It belongs to the FKBP-type PPIase family. Tig subfamily.

The protein resides in the cytoplasm. It carries out the reaction [protein]-peptidylproline (omega=180) = [protein]-peptidylproline (omega=0). Involved in protein export. Acts as a chaperone by maintaining the newly synthesized protein in an open conformation. Functions as a peptidyl-prolyl cis-trans isomerase. This chain is Trigger factor (tig), found in Neisseria meningitidis serogroup B (strain ATCC BAA-335 / MC58).